A 132-amino-acid chain; its full sequence is Small ribosomal subunit protein uS11 (132 aa).

It belongs to the universal ribosomal protein uS11 family. As to quaternary structure, part of the 30S ribosomal subunit. Interacts with proteins S7 and S18. Binds to IF-3.

Its function is as follows. Located on the platform of the 30S subunit, it bridges several disparate RNA helices of the 16S rRNA. Forms part of the Shine-Dalgarno cleft in the 70S ribosome. The protein is Small ribosomal subunit protein uS11 of Chlamydia felis (strain Fe/C-56) (Chlamydophila felis).